Consider the following 357-residue polypeptide: Quinolinate synthase (357 aa).

The iminosuccinate site is built by histidine 50 and serine 71. Residue cysteine 116 participates in [4Fe-4S] cluster binding. Iminosuccinate-binding positions include 142–144 and serine 159; that span reads YAN. Residue cysteine 203 coordinates [4Fe-4S] cluster. Iminosuccinate contacts are provided by residues 229-231 and threonine 246; that span reads HPE. Cysteine 300 lines the [4Fe-4S] cluster pocket.

Belongs to the quinolinate synthase family. Type 1 subfamily. [4Fe-4S] cluster is required as a cofactor.

It localises to the cytoplasm. The catalysed reaction is iminosuccinate + dihydroxyacetone phosphate = quinolinate + phosphate + 2 H2O + H(+). It functions in the pathway cofactor biosynthesis; NAD(+) biosynthesis; quinolinate from iminoaspartate: step 1/1. In terms of biological role, catalyzes the condensation of iminoaspartate with dihydroxyacetone phosphate to form quinolinate. In Shewanella oneidensis (strain ATCC 700550 / JCM 31522 / CIP 106686 / LMG 19005 / NCIMB 14063 / MR-1), this protein is Quinolinate synthase.